A 175-amino-acid chain; its full sequence is uncharacterized protein (175 aa).

The DNL-type zinc finger occupies 71 to 166 (QPKPTYNVSF…KPPQFKIRPA (96 aa)). Zn(2+) is bound by residues Cys82, Cys85, Cys107, and Cys110.

This is an uncharacterized protein from Schizosaccharomyces pombe (strain 972 / ATCC 24843) (Fission yeast).